The following is a 172-amino-acid chain: Large ribosomal subunit protein uL10 (172 aa).

It belongs to the universal ribosomal protein uL10 family. As to quaternary structure, part of the ribosomal stalk of the 50S ribosomal subunit. The N-terminus interacts with L11 and the large rRNA to form the base of the stalk. The C-terminus forms an elongated spine to which L12 dimers bind in a sequential fashion forming a multimeric L10(L12)X complex.

In terms of biological role, forms part of the ribosomal stalk, playing a central role in the interaction of the ribosome with GTP-bound translation factors. The chain is Large ribosomal subunit protein uL10 from Rhodospirillum rubrum (strain ATCC 11170 / ATH 1.1.1 / DSM 467 / LMG 4362 / NCIMB 8255 / S1).